Here is a 457-residue protein sequence, read N- to C-terminus: Streptogrisin-C (457 aa).

The segment at residues 1 to 34 (MERTTLRRRALVAGTATVAVGALALAGLTGVASA) is a signal peptide (tat-type signal). Residues 35–202 (DPAATAAPPV…ARSAEQPRAL (168 aa)) constitute a propeptide that is removed on maturation. The catalytic stretch occupies residues 203-393 (ADIRGGDAYY…QAYGLTLVTS (191 aa)). A disulfide bridge links Cys219 with Cys239. Residues His238 and Asp266 each act as charge relay system in the active site. Intrachain disulfides connect Cys305–Cys315 and Cys341–Cys368. Ser347 acts as the Charge relay system in catalysis. The disordered stretch occupies residues 393 to 412 (SGGGTPTDPPTTPPTDSPGG). The linker stretch occupies residues 394–413 (GGGTPTDPPTTPPTDSPGGT). Pro residues predominate over residues 399 to 408 (TDPPTTPPTD). The 43-residue stretch at 415–457 (AVGTAYAAGATVTYGGATYRCLQAHTAQPGWTPADVPALWQRV) folds into the Chitin-binding type-3 domain.

This sequence belongs to the peptidase S1 family. In terms of assembly, monomer. Post-translationally, predicted to be exported by the Tat system. The position of the signal peptide cleavage has not been experimentally proven.

Its function is as follows. Hydrolysis of proteins with specificity similar to chymotrypsin. May be specialized for the degradation of chitin-linked proteins. Has a primary specificity for large aliphatic or aromatic amino acids. The chain is Streptogrisin-C (sprC) from Streptomyces griseus.